The sequence spans 640 residues: Paramyosin, short form (640 aa).

Nonhelical region stretches follow at residues 1–122 (MALA…PDTV) and 420–640 (KLEQ…TITE). The stretch at 123–619 (VERSRQRRRR…IIRAKHRTFV (497 aa)) forms a coiled coil.

This sequence belongs to the paramyosin family. In terms of processing, phosphorylated. Found in all adult muscle tissues except in indirect flight muscles and a set of temporary abdominal muscles. Not detected in larval muscle.

The protein localises to the cytoplasm. The protein resides in the myofibril. Paramyosin is a major structural component of many thick filaments isolated from invertebrate muscles. This Drosophila melanogaster (Fruit fly) protein is Paramyosin, short form (Prm).